The following is a 353-amino-acid chain: uncharacterized protein (353 aa).

Positions 18–83 constitute an HTH luxR-type domain; sequence NIEFPCLLSE…TLWRDVFLRF (66 aa). Residues 42 to 61 constitute a DNA-binding region (H-T-H motif); sequence VNEISKRRNRSIKTVSCQKM. The EAL domain maps to 98–350; it reads NSSVLPVVSS…AFVRKLLASL (253 aa).

This is an uncharacterized protein from Escherichia coli (strain K12).